Consider the following 185-residue polypeptide: Inner membrane-spanning protein YciB (185 aa).

The next 5 helical transmembrane spans lie at 19 to 39 (LGGVREAAIVLVVATILQIVI), 53 to 73 (IMASAVVFFGLLTAYFNEIRY), 76 to 96 (WKVTIINGLFAIVLLIAQFQF), 118 to 138 (TLNFGWAIFFIICMLVNIYIS), and 149 to 169 (FKSFGIIGMTVIATIISGVYI).

Belongs to the YciB family.

The protein localises to the cell inner membrane. Plays a role in cell envelope biogenesis, maintenance of cell envelope integrity and membrane homeostasis. The protein is Inner membrane-spanning protein YciB of Haemophilus influenzae (strain PittEE).